We begin with the raw amino-acid sequence, 51 residues long: Small ribosomal subunit protein eS31 (51 aa).

Cysteine 22, cysteine 25, cysteine 40, and cysteine 43 together coordinate Zn(2+). The C4-type zinc-finger motif lies at 22–43 (CVRCSHGIFMADHGDRYACGRC).

The protein belongs to the eukaryotic ribosomal protein eS31 family. As to quaternary structure, part of the 30S ribosomal subunit. It depends on Zn(2+) as a cofactor.

The polypeptide is Small ribosomal subunit protein eS31 (Methanosphaera stadtmanae (strain ATCC 43021 / DSM 3091 / JCM 11832 / MCB-3)).